The chain runs to 536 residues: Metal transporter Nramp2 (536 aa).

The interval 1-37 is disordered; sequence MSSPSGGEDSKDDEKDEESNRLLPLSSSSQSQSLQSE. Low complexity predominate over residues 22-36; that stretch reads LLPLSSSSQSQSLQS. The N-linked (GlcNAc...) asparagine glycan is linked to Asn-38. Transmembrane regions (helical) follow at residues 76–96, 104–124, 161–181, 185–205, 213–233, 259–279, 305–325, 347–367, 400–420, 435–455, 465–485, and 492–512; these read LWLF…PGNL, AIAG…GLLI, VALI…IQIL, FLPL…FLFL, LEGV…WMCG, AVGV…SALV, VALF…AKGF, YGGG…AAGQ, SFAI…EASL, IPFA…MGVF, AWTI…DFFI, and LFGF…IYLV.

Belongs to the NRAMP (TC 2.A.55) family.

The protein resides in the membrane. Functionally, probable divalent metal transporter. The polypeptide is Metal transporter Nramp2 (Populus trichocarpa (Western balsam poplar)).